The sequence spans 129 residues: Protein LLP homolog (129 aa).

Residues Met-1–Asn-21 are compositionally biased toward basic residues. Residues Met-1–Ser-27 are disordered. Residues Lys-67 and Lys-74 each participate in a glycyl lysine isopeptide (Lys-Gly) (interchain with G-Cter in SUMO2) cross-link. The span at Arg-100 to Lys-122 shows a compositional bias: basic residues. The disordered stretch occupies residues Arg-100–Trp-129.

The protein belongs to the learning-associated protein family. Interacts with CTCF, MYO1C and with the transcriptional machinery, including RNA polymerase II and TBP.

It localises to the nucleus. The protein localises to the nucleolus. The protein resides in the chromosome. In hippocampal neurons, regulates dendritic and spine growth and synaptic transmission. In Homo sapiens (Human), this protein is Protein LLP homolog (LLPH).